The sequence spans 397 residues: Argininosuccinate synthase (397 aa).

8-16 (AYSGGLDTS) contacts ATP. Position 87 (tyrosine 87) interacts with L-citrulline. Glycine 117 contributes to the ATP binding site. L-aspartate is bound by residues threonine 119, asparagine 123, and aspartate 124. L-citrulline is bound at residue asparagine 123. L-citrulline-binding residues include arginine 127, serine 175, glutamate 259, and tyrosine 271.

Belongs to the argininosuccinate synthase family. Type 1 subfamily. In terms of assembly, homotetramer.

Its subcellular location is the cytoplasm. The enzyme catalyses L-citrulline + L-aspartate + ATP = 2-(N(omega)-L-arginino)succinate + AMP + diphosphate + H(+). It functions in the pathway amino-acid biosynthesis; L-arginine biosynthesis; L-arginine from L-ornithine and carbamoyl phosphate: step 2/3. This is Argininosuccinate synthase from Streptomyces clavuligerus.